The following is a 184-amino-acid chain: ATP synthase subunit b, chloroplastic (184 aa).

Residues 27–49 (LATNPINLSVVFGVLIFFGKGVL) traverse the membrane as a helical segment.

Belongs to the ATPase B chain family. As to quaternary structure, F-type ATPases have 2 components, F(1) - the catalytic core - and F(0) - the membrane proton channel. F(1) has five subunits: alpha(3), beta(3), gamma(1), delta(1), epsilon(1). F(0) has four main subunits: a(1), b(1), b'(1) and c(10-14). The alpha and beta chains form an alternating ring which encloses part of the gamma chain. F(1) is attached to F(0) by a central stalk formed by the gamma and epsilon chains, while a peripheral stalk is formed by the delta, b and b' chains.

It is found in the plastid. It localises to the chloroplast thylakoid membrane. In terms of biological role, f(1)F(0) ATP synthase produces ATP from ADP in the presence of a proton or sodium gradient. F-type ATPases consist of two structural domains, F(1) containing the extramembraneous catalytic core and F(0) containing the membrane proton channel, linked together by a central stalk and a peripheral stalk. During catalysis, ATP synthesis in the catalytic domain of F(1) is coupled via a rotary mechanism of the central stalk subunits to proton translocation. Functionally, component of the F(0) channel, it forms part of the peripheral stalk, linking F(1) to F(0). The sequence is that of ATP synthase subunit b, chloroplastic from Arabis hirsuta (Hairy rock-cress).